Reading from the N-terminus, the 134-residue chain is Profilin-3 (134 aa).

An intrachain disulfide couples Cys13 to Cys118. An Involved in PIP2 interaction motif is present at residues 84–100 (AVIRGKKGSGGITIKKT). A Phosphothreonine modification is found at Thr114.

Belongs to the profilin family. In terms of assembly, occurs in many kinds of cells as a complex with monomeric actin in a 1:1 ratio. Phosphorylated by MAP kinases.

It is found in the cytoplasm. It localises to the cytoskeleton. Binds to actin and affects the structure of the cytoskeleton. At high concentrations, profilin prevents the polymerization of actin, whereas it enhances it at low concentrations. This is Profilin-3 from Olea europaea (Common olive).